A 42-amino-acid polypeptide reads, in one-letter code: Delta-actitoxin-Ael2d (42 aa).

3 disulfide bridges follow: Cys-4–Cys-37, Cys-6–Cys-30, and Cys-20–Cys-38.

This sequence belongs to the sea anemone type 3 (BDS) potassium channel toxin family.

It is found in the secreted. The protein localises to the nematocyst. Its function is as follows. Binds to voltage-gated sodium channels (Nav), and slows down the inactivation of mammalian Nav1.2/SCN2A, Nav1.3/SCN3A Nav1.4/SCN4A, Nav1.6/SCN8A, insect DmNav1 and BgNav1 channels, and arachnid VdNav1 channel. This toxin acts by binding to site 3 of sodium channels. The protein is Delta-actitoxin-Ael2d of Anthopleura elegantissima (Green aggregating anemone).